The following is a 302-amino-acid chain: tRNA-cytidine(32) 2-sulfurtransferase (302 aa).

The short motif at 45 to 50 is the PP-loop motif element; sequence SGGKDS. Cys120, Cys123, and Cys211 together coordinate [4Fe-4S] cluster.

This sequence belongs to the TtcA family. Homodimer. It depends on Mg(2+) as a cofactor. [4Fe-4S] cluster is required as a cofactor.

It localises to the cytoplasm. It carries out the reaction cytidine(32) in tRNA + S-sulfanyl-L-cysteinyl-[cysteine desulfurase] + AH2 + ATP = 2-thiocytidine(32) in tRNA + L-cysteinyl-[cysteine desulfurase] + A + AMP + diphosphate + H(+). The protein operates within tRNA modification. Its function is as follows. Catalyzes the ATP-dependent 2-thiolation of cytidine in position 32 of tRNA, to form 2-thiocytidine (s(2)C32). The sulfur atoms are provided by the cysteine/cysteine desulfurase (IscS) system. The protein is tRNA-cytidine(32) 2-sulfurtransferase of Cellvibrio japonicus (strain Ueda107) (Pseudomonas fluorescens subsp. cellulosa).